The following is a 365-amino-acid chain: IgG receptor FcRn large subunit p51 (365 aa).

Residues 1–23 (MGVPRPQPWALGLLLFLLPGSLG) form the signal peptide. Positions 24–110 (AESHLSLLYH…AFKALGGKGP (87 aa)) are alpha-1. The Extracellular portion of the chain corresponds to 24-297 (AESHLSLLYH…VELESPAKSS (274 aa)). The interval 111-200 (YTLQGLLGCE…ERGRGNLEWK (90 aa)) is alpha-2. 2 cysteine pairs are disulfide-bonded: cysteine 119-cysteine 182 and cysteine 221-cysteine 275. The N-linked (GlcNAc...) asparagine glycan is linked to asparagine 125. The alpha-3 stretch occupies residues 201 to 290 (EPPSMRLKAR…GLAQPLRVEL (90 aa)). The region spanning 202–289 (PPSMRLKARP…AGLAQPLRVE (88 aa)) is the Ig-like C1-type domain. Residues 291–297 (ESPAKSS) are connecting peptide. A helical membrane pass occupies residues 298–321 (VLVVGIVIGVLLLTAAAVGGALLW). The Cytoplasmic segment spans residues 322 to 365 (RRMRSGLPAPWISLRGDDTGVLLPTPGEAQDADLKDVNVIPATA). Serine 334 is modified (phosphoserine).

This sequence belongs to the immunoglobulin superfamily. As to quaternary structure, fcRn complex consists of two subunits: p51, and p14 which is equivalent to beta-2-microglobulin. It forms an MHC class I-like heterodimer. Interacts with albumin/ALB; this interaction regulates ALB homeostasis. In terms of assembly, (Microbial infection) Interacts with Echovirus 6, Echovirus 11 and Echovirus 30 capsid protein VP1. Expressed in full-term placenta, heart, lung, liver, muscle, kidney, pancreas, and both fetal and adult small intestine.

Its subcellular location is the cell membrane. It localises to the endosome membrane. Functionally, cell surface receptor that transfers passive humoral immunity from the mother to the newborn. Binds to the Fc region of monomeric immunoglobulin gamma and mediates its selective uptake from milk. IgG in the milk is bound at the apical surface of the intestinal epithelium. The resultant FcRn-IgG complexes are transcytosed across the intestinal epithelium and IgG is released from FcRn into blood or tissue fluids. Throughout life, contributes to effective humoral immunity by recycling IgG and extending its half-life in the circulation. Mechanistically, monomeric IgG binding to FcRn in acidic endosomes of endothelial and hematopoietic cells recycles IgG to the cell surface where it is released into the circulation. In addition of IgG, regulates homeostasis of the other most abundant circulating protein albumin/ALB. Its function is as follows. (Microbial infection) Acts as an uncoating receptor for a panel of echoviruses including Echovirus 5, 6, 7, 9, 11, 13, 25 and 29. The protein is IgG receptor FcRn large subunit p51 (FCGRT) of Homo sapiens (Human).